A 351-amino-acid chain; its full sequence is GTPase Obg (351 aa).

Positions 1 to 159 (MKFLDQCKIY…RWVWLRLKLI (159 aa)) constitute an Obg domain. The OBG-type G domain maps to 160–327 (ADAGLVGLPN…MLFELLRHIR (168 aa)). Residues 166–173 (GLPNAGKS), 191–195 (FTTLT), 212–215 (DIPG), 279–282 (NKID), and 308–310 (SGA) each bind GTP. Mg(2+) contacts are provided by S173 and T193.

It belongs to the TRAFAC class OBG-HflX-like GTPase superfamily. OBG GTPase family. Monomer. Mg(2+) serves as cofactor.

Its subcellular location is the cytoplasm. In terms of biological role, an essential GTPase which binds GTP, GDP and possibly (p)ppGpp with moderate affinity, with high nucleotide exchange rates and a fairly low GTP hydrolysis rate. Plays a role in control of the cell cycle, stress response, ribosome biogenesis and in those bacteria that undergo differentiation, in morphogenesis control. The polypeptide is GTPase Obg (Rhodospirillum centenum (strain ATCC 51521 / SW)).